The sequence spans 56 residues: Photosystem II reaction center protein K (56 aa).

Positions 1 to 19 (MLNFLLQNTFVLWSNFILC) are excised as a propeptide. A helical membrane pass occupies residues 35–55 (MPVIPVFFFLLAFVWQAAVSF).

The protein belongs to the PsbK family. In terms of assembly, PSII is composed of 1 copy each of membrane proteins PsbA, PsbB, PsbC, PsbD, PsbE, PsbF, PsbH, PsbI, PsbJ, PsbK, PsbL, PsbM, PsbT, PsbX, PsbY, PsbZ, Psb30/Ycf12, at least 3 peripheral proteins of the oxygen-evolving complex and a large number of cofactors. It forms dimeric complexes.

Its subcellular location is the plastid. The protein localises to the chloroplast thylakoid membrane. One of the components of the core complex of photosystem II (PSII). PSII is a light-driven water:plastoquinone oxidoreductase that uses light energy to abstract electrons from H(2)O, generating O(2) and a proton gradient subsequently used for ATP formation. It consists of a core antenna complex that captures photons, and an electron transfer chain that converts photonic excitation into a charge separation. This chain is Photosystem II reaction center protein K, found in Welwitschia mirabilis (Tree tumbo).